Reading from the N-terminus, the 445-residue chain is Homoserine O-succinyltransferase (445 aa).

Residues 45–411 (NAVLICHALS…APHGHDSFLF (367 aa)) enclose the AB hydrolase-1 domain. Residue serine 153 is the Nucleophile of the active site. Arginine 223 contributes to the substrate binding site. Residues aspartate 373 and histidine 406 contribute to the active site. Aspartate 407 is a substrate binding site.

The protein belongs to the AB hydrolase superfamily. MetX family. As to quaternary structure, homodimer.

It localises to the cytoplasm. It carries out the reaction L-homoserine + succinyl-CoA = O-succinyl-L-homoserine + CoA. The protein operates within amino-acid biosynthesis; L-methionine biosynthesis via de novo pathway; O-succinyl-L-homoserine from L-homoserine: step 1/1. Transfers a succinyl group from succinyl-CoA to L-homoserine, forming succinyl-L-homoserine. This Psychrobacter arcticus (strain DSM 17307 / VKM B-2377 / 273-4) protein is Homoserine O-succinyltransferase.